The following is a 207-amino-acid chain: Peptidyl-tRNA hydrolase (207 aa).

Y17 serves as a coordination point for tRNA. Catalysis depends on H22, which acts as the Proton acceptor. TRNA contacts are provided by F68, N70, and N116.

The protein belongs to the PTH family. Monomer.

It localises to the cytoplasm. It catalyses the reaction an N-acyl-L-alpha-aminoacyl-tRNA + H2O = an N-acyl-L-amino acid + a tRNA + H(+). Functionally, hydrolyzes ribosome-free peptidyl-tRNAs (with 1 or more amino acids incorporated), which drop off the ribosome during protein synthesis, or as a result of ribosome stalling. Catalyzes the release of premature peptidyl moieties from peptidyl-tRNA molecules trapped in stalled 50S ribosomal subunits, and thus maintains levels of free tRNAs and 50S ribosomes. The sequence is that of Peptidyl-tRNA hydrolase from Buchnera aphidicola subsp. Baizongia pistaciae (strain Bp).